Here is a 574-residue protein sequence, read N- to C-terminus: Membrane protein insertase YidC (574 aa).

A run of 6 helical transmembrane segments spans residues 6 to 26, 350 to 370, 376 to 396, 447 to 467, 491 to 511, and 525 to 545; these read VFLIFAWLMVAALLWMEWGKE, VIDYSRFSIMAIIGQGLFWVL, FLHNWGWAIVGLVVLLRLVLY, GGCLPLLIQMPIFFALYWVLV, FILPALNIAIMWATQKLTPTP, and PLVFGAMMAFVPSGLVLYWVV.

The protein belongs to the OXA1/ALB3/YidC family. Type 1 subfamily. Interacts with the Sec translocase complex via SecD. Specifically interacts with transmembrane segments of nascent integral membrane proteins during membrane integration.

The protein localises to the cell inner membrane. Its function is as follows. Required for the insertion and/or proper folding and/or complex formation of integral membrane proteins into the membrane. Involved in integration of membrane proteins that insert both dependently and independently of the Sec translocase complex, as well as at least some lipoproteins. Aids folding of multispanning membrane proteins. The polypeptide is Membrane protein insertase YidC (Xanthomonas oryzae pv. oryzae (strain KACC10331 / KXO85)).